The chain runs to 750 residues: Neprilysin (750 aa).

Residues M1–N14 are compositionally biased toward polar residues. Residues M1–K20 are disordered. G2 carries the N-myristoyl glycine lipid modification. Residues G2–E28 are Cytoplasmic-facing. A phosphoserine mark is found at S4 and S6. The Stop-transfer sequence motif lies at P16–R23. The chain crosses the membrane as a helical; Signal-anchor for type II membrane protein span at residues I29 to T51. The Extracellular segment spans residues Y52–W750. The Peptidase M13 domain maps to I56–W750. Cystine bridges form between C57-C62, C80-C735, C88-C695, C143-C411, C234-C242, and C621-C747. Position 103 (R103) interacts with a peptide. N145 is a glycosylation site (N-linked (GlcNAc...) asparagine). N285, N311, and N325 each carry an N-linked (GlcNAc...) asparagine glycan. A Zn(2+)-binding site is contributed by H584. The active site involves E585. H588 lines the Zn(2+) pocket. The N-linked (GlcNAc...) asparagine glycan is linked to N628. E647 provides a ligand contact to Zn(2+). The active-site Proton donor is the D651.

It belongs to the peptidase M13 family. It depends on Zn(2+) as a cofactor. Post-translationally, myristoylation is a determinant of membrane targeting. In terms of processing, glycosylation at Asn-628 is necessary both for surface expression and neutral endopeptidase activity.

It is found in the cell membrane. The catalysed reaction is Preferential cleavage of polypeptides between hydrophobic residues, particularly with Phe or Tyr at P1'.. It carries out the reaction substance P + H2O = substance P(1-9) + L-Leu-L-Met-NH2. It catalyses the reaction substance P + H2O = substance P(1-7) + L-Phe-Gly-L-Leu-L-Met-NH2. The enzyme catalyses neurotensin + H2O = neurotensin(1-11) + L-isoleucyl-L-leucine. The catalysed reaction is neurotensin + H2O = neurotensin(1-10) + L-tyrosyl-L-isoleucyl-L-leucine. Its activity is regulated as follows. Inhibited by mixanpril, an orally-active drug used for the treatment of hypertension. Functionally, thermolysin-like specificity, but is almost confined on acting on polypeptides of up to 30 amino acids. Biologically important in the destruction of opioid peptides such as Met- and Leu-enkephalins by cleavage of a Gly-Phe bond. Catalyzes cleavage of bradykinin, substance P and neurotensin peptides. Able to cleave angiotensin-1, angiotensin-2 and angiotensin 1-9. Involved in the degradation of atrial natriuretic factor (ANF) and brain natriuretic factor (BNP(1-32)). Displays UV-inducible elastase activity toward skin preelastic and elastic fibers. The chain is Neprilysin (MME) from Oryctolagus cuniculus (Rabbit).